We begin with the raw amino-acid sequence, 200 residues long: Transgelin (200 aa).

At Ala2 the chain carries N-acetylalanine. Positions 24–137 constitute a Calponin-homology (CH) domain; the sequence is DELEDRLVEW…RTLVALGSLA (114 aa). The Calponin-like repeat unit spans residues 175 to 199; sequence IGLQMGTNKGASQAGMSYGRPRQII.

Belongs to the calponin family. Monomer. As to expression, gizzard, uterus, intestine, esophagus, aorta, and trace amounts in brain, liver and heart.

The protein resides in the cytoplasm. In terms of biological role, actin cross-linking/gelling protein. This Gallus gallus (Chicken) protein is Transgelin (TAGLN).